The primary structure comprises 336 residues: DNA-directed RNA polymerase subunit alpha (336 aa).

Positions 1–233 are alpha N-terminal domain (alpha-NTD); the sequence is MSSNSFLTPR…EQFSFFADLE (233 aa). Residues 247–336 are alpha C-terminal domain (alpha-CTD); that stretch reads IDPILLRPVD…YIKEPGHASS (90 aa).

The protein belongs to the RNA polymerase alpha chain family. As to quaternary structure, homodimer. The RNAP catalytic core consists of 2 alpha, 1 beta, 1 beta' and 1 omega subunit. When a sigma factor is associated with the core the holoenzyme is formed, which can initiate transcription.

It carries out the reaction RNA(n) + a ribonucleoside 5'-triphosphate = RNA(n+1) + diphosphate. DNA-dependent RNA polymerase catalyzes the transcription of DNA into RNA using the four ribonucleoside triphosphates as substrates. The chain is DNA-directed RNA polymerase subunit alpha from Nitrosomonas europaea (strain ATCC 19718 / CIP 103999 / KCTC 2705 / NBRC 14298).